A 588-amino-acid chain; its full sequence is BTB/POZ domain-containing protein At3g26490 (588 aa).

Residues 28–99 (NDLVIQVKST…CYGITITLCA (72 aa)) enclose the BTB domain. Residues 218–507 (RWWGEDLAEL…VQILFVEQAR (290 aa)) enclose the NPH3 domain. Phosphoserine occurs at positions 376 and 378. At tyrosine 448 the chain carries Phosphotyrosine. Residues 529 to 554 (FTTRREEGGQEEEERDETKPSGGFLQ) are disordered.

Belongs to the NPH3 family.

It functions in the pathway protein modification; protein ubiquitination. In terms of biological role, may act as a substrate-specific adapter of an E3 ubiquitin-protein ligase complex (CUL3-RBX1-BTB) which mediates the ubiquitination and subsequent proteasomal degradation of target proteins. The sequence is that of BTB/POZ domain-containing protein At3g26490 from Arabidopsis thaliana (Mouse-ear cress).